Here is a 37-residue protein sequence, read N- to C-terminus: Large ribosomal subunit protein bL36c (37 aa).

This sequence belongs to the bacterial ribosomal protein bL36 family.

Its subcellular location is the plastid. The protein localises to the chloroplast. In Chlorella vulgaris (Green alga), this protein is Large ribosomal subunit protein bL36c (rpl36).